The sequence spans 193 residues: Peptidyl-tRNA hydrolase (193 aa).

Tyr18 is a binding site for tRNA. His23 functions as the Proton acceptor in the catalytic mechanism. TRNA is bound by residues Phe69, Asn71, and Asn117.

The protein belongs to the PTH family. In terms of assembly, monomer.

The protein resides in the cytoplasm. It catalyses the reaction an N-acyl-L-alpha-aminoacyl-tRNA + H2O = an N-acyl-L-amino acid + a tRNA + H(+). Hydrolyzes ribosome-free peptidyl-tRNAs (with 1 or more amino acids incorporated), which drop off the ribosome during protein synthesis, or as a result of ribosome stalling. Its function is as follows. Catalyzes the release of premature peptidyl moieties from peptidyl-tRNA molecules trapped in stalled 50S ribosomal subunits, and thus maintains levels of free tRNAs and 50S ribosomes. The chain is Peptidyl-tRNA hydrolase from Teredinibacter turnerae (strain ATCC 39867 / T7901).